A 200-amino-acid polypeptide reads, in one-letter code: GTP cyclohydrolase-2 (200 aa).

49–53 (RIHSE) is a binding site for GTP. Residues Cys-54, Cys-65, and Cys-67 each contribute to the Zn(2+) site. GTP is bound by residues Gln-70, 92 to 94 (EGR), and Thr-114. Asp-126 serves as the catalytic Proton acceptor. The active-site Nucleophile is Arg-128. 2 residues coordinate GTP: Thr-149 and Lys-154.

The protein belongs to the GTP cyclohydrolase II family. Zn(2+) is required as a cofactor.

It carries out the reaction GTP + 4 H2O = 2,5-diamino-6-hydroxy-4-(5-phosphoribosylamino)-pyrimidine + formate + 2 phosphate + 3 H(+). The protein operates within cofactor biosynthesis; riboflavin biosynthesis; 5-amino-6-(D-ribitylamino)uracil from GTP: step 1/4. In terms of biological role, catalyzes the conversion of GTP to 2,5-diamino-6-ribosylamino-4(3H)-pyrimidinone 5'-phosphate (DARP), formate and pyrophosphate. The sequence is that of GTP cyclohydrolase-2 from Saccharophagus degradans (strain 2-40 / ATCC 43961 / DSM 17024).